Reading from the N-terminus, the 113-residue chain is RING-box protein 2 (113 aa).

A disordered region spans residues 1–26; sequence MADVEDGEEPCVLSSHSGSAGSKSGG. N-acetylalanine is present on alanine 2. The Zn(2+) site is built by cysteine 50, cysteine 53, cysteine 61, cysteine 64, cysteine 73, cysteine 80, histidine 82, histidine 85, cysteine 87, cysteine 88, cysteine 99, and cysteine 102. The RING-type zinc finger occupies 61–103; it reads CLRCQAENKQEDCVVVWGECNHSFHNCCMSLWVKQNNRCPLCQ.

The protein belongs to the RING-box family. Catalytic component of multiple cullin-5-RING E3 ubiquitin-protein ligase complexes (ECS complexes, also named CRL5 complexes) composed of CUL5, Elongin BC (ELOB and ELOC), RNF7/RBX2 and a variable SOCS box domain-containing protein as substrate-specific recognition component. Also interacts (with lower preference) with CUL1, CUL2, CUL3, CUL4A and CUL4B; additional evidence is however required to confirm this result in vivo. Interacts with UBE2F. Interacts with CSNK2B, the interaction is not affected by phosphorylation by CK2. May also interact with DCUN1D1, DCUN1D2, DCUN1D3, DCUN1D4 and DCUN1D5.

Its subcellular location is the cytoplasm. It localises to the nucleus. The catalysed reaction is S-ubiquitinyl-[E2 ubiquitin-conjugating enzyme]-L-cysteine + [acceptor protein]-L-lysine = [E2 ubiquitin-conjugating enzyme]-L-cysteine + N(6)-ubiquitinyl-[acceptor protein]-L-lysine.. The enzyme catalyses S-[NEDD8-protein]-yl-[E2 NEDD8-conjugating enzyme]-L-cysteine + [cullin]-L-lysine = [E2 NEDD8-conjugating enzyme]-L-cysteine + N(6)-[NEDD8-protein]-yl-[cullin]-L-lysine.. Its pathway is protein modification; protein ubiquitination. The protein operates within protein modification; protein neddylation. In terms of biological role, catalytic component of multiple cullin-5-RING E3 ubiquitin-protein ligase complexes (ECS complexes), which mediate the ubiquitination and subsequent proteasomal degradation of target proteins. It is thereby involved in various biological processes, such as cell cycle progression, signal transduction and transcription. The functional specificity of the E3 ubiquitin-protein ligase ECS complexes depend on the variable SOCS box-containing substrate recognition component. Within ECS complexes, RNF7/RBX2 recruits the E2 ubiquitination enzyme to the complex via its RING-type and brings it into close proximity to the substrate. Catalytic subunit of various SOCS-containing ECS complexes, such as the ECS(SOCS7) complex, that regulate reelin signaling by mediating ubiquitination and degradation of DAB1. The ECS(SOCS2) complex mediates the ubiquitination and subsequent proteasomal degradation of phosphorylated EPOR and GHR. Promotes ubiquitination and degradation of NF1, thereby regulating Ras protein signal transduction. As part of the ECS(ASB9) complex, catalyzes ubiquitination and degradation of CKB. The ECS(SPSB3) complex catalyzes ubiquitination of nuclear CGAS. As part of the ECS(RAB40C) complex, mediates ANKRD28 ubiquitination and degradation, thereby inhibiting protein phosphatase 6 (PP6) complex activity and focal adhesion assembly during cell migration. As part of some ECS complex, catalyzes 'Lys-11'-linked ubiquitination and degradation of BTRC. ECS complexes and ARIH2 collaborate in tandem to mediate ubiquitination of target proteins; ARIH2 mediating addition of the first ubiquitin on CRLs targets. Specifically catalyzes the neddylation of CUL5 via its interaction with UBE2F. Does not catalyze neddylation of other cullins (CUL1, CUL2, CUL3, CUL4A or CUL4B). May play a role in protecting cells from apoptosis induced by redox agents. This is RING-box protein 2 from Mus musculus (Mouse).